The following is a 99-amino-acid chain: Sperm protein associated with the nucleus on the X chromosome N4 (99 aa).

Residues 1 to 10 are compositionally biased toward polar residues; the sequence is MEEPTSSTNE. Residues 1–99 are disordered; that stretch reads MEEPTSSTNE…AGSPQDGGQN (99 aa). Residues 11–22 are compositionally biased toward basic and acidic residues; it reads NKMKSPCESNKR. Over residues 23 to 32 the composition is skewed to basic residues; that stretch reads KVDKKKKNLH. Over residues 64–78 the composition is skewed to polar residues; sequence SNQLENNQPTESSTD.

This sequence belongs to the SPAN-X family.

This chain is Sperm protein associated with the nucleus on the X chromosome N4 (SPANXN4), found in Homo sapiens (Human).